The following is a 1516-amino-acid chain: EF-hand calcium-binding domain-containing protein 6 (1516 aa).

A disordered region spans residues 1 to 23 (MKRNGTRLNFAKANSTKSGSTRA). The span at 12–21 (KANSTKSGST) shows a compositional bias: polar residues. 5 consecutive EF-hand domains span residues 96–131 (SRRDDIKKVFQILDRNHNQMVTKGDLKRVITAFLIP), 197–232 (RNMRSIRKVFQVMDVNNTGLVQPQELRRVLETFCLR), 321–356 (KSYEKIEKALSAGDPSKGGYISLNYLKVVLDTFIYR), 444–462 (SGHITWEELRHILNCMVAK), and 528–563 (RNLQAFYSMLQSYDLRDTGTIGKNNFRKVMRVFCPY). Positions 109, 111, 113, 115, 120, 210, 212, 214, and 221 each coordinate Ca(2+). The tract at residues 618 to 638 (EEPGQQDERTQPSGEKTSEIN) is disordered. Positions 628 to 638 (QPSGEKTSEIN) are enriched in polar residues. 6 EF-hand domains span residues 674-690 (KINQEEFRKVLERSGMP), 763-798 (ESFRDVYSAFFRIDLDRDGIISMHDFHRLLQYLQLN), 905-940 (LTPREFEKLWQNYDTEGRGYITYQEFLHRLGIRYSP), 1086-1121 (SSQPALVEAFSALDKEDTGFVKAMEFGDVLRSVCQK), 1193-1228 (SHYHTIVQEFENFDTLKSNTVSRDEFRSICTRHIQI), and 1229-1264 (LTDEQFDRLWSELPVNAKGRLKYQDFLSKLSIERVP). Positions 776, 778, 780, and 787 each coordinate Ca(2+). Threonine 906 is subject to Phosphothreonine. A disordered region spans residues 1263–1318 (VPSPPMAAGDSGESTMAQRGSSAPEFSQGTRSNLYSPPRDSRVGLKSRSHPCTPVG). Serine 1265 is modified (phosphoserine). The span at 1274–1297 (GESTMAQRGSSAPEFSQGTRSNLY) shows a compositional bias: polar residues. Position 1311 is a phosphoserine (serine 1311). Phosphothreonine occurs at positions 1315 and 1319. The interval 1318-1516 (GTPPLQNCEP…YNDFLRAFLQ (199 aa)) is interaction with PARK7. EF-hand domains lie at 1348–1373 (KEKDTDKQGTISAAEFLALVEKFKLD), 1374–1409 (ISREESQQLIVKYDLKNNGKFAYCDFIQSCVLLLKA), 1454–1484 (MRRSFKTYDKNGTGLLSVADFRKVLRQYSIN), and 1485–1516 (LSEEEFFHVLEYYDKSLSSKISYNDFLRAFLQ). Residues 1422–1516 (NADKMKEAGM…YNDFLRAFLQ (95 aa)) are interaction with AR. Ca(2+) is bound by residues aspartate 1462, asparagine 1464, threonine 1466, and aspartate 1473.

Microtubule inner protein component of sperm flagellar doublet microtubules. Binds PARK7. Part of a ternary complex containing PARK7, EFCAB6/DJBP and AR.

The protein resides in the nucleus. It localises to the cytoplasm. It is found in the cytoskeleton. Its subcellular location is the flagellum axoneme. Negatively regulates the androgen receptor by recruiting histone deacetylase complex, and protein DJ-1 antagonizes this inhibition by abrogation of this complex. Microtubule inner protein (MIP) part of the dynein-decorated doublet microtubules (DMTs) in cilia axoneme, which is required for motile cilia beating. This is EF-hand calcium-binding domain-containing protein 6 (Efcab6) from Mus musculus (Mouse).